Here is a 411-residue protein sequence, read N- to C-terminus: Tyrosine--tRNA ligase (411 aa).

Tyr-33 lines the L-tyrosine pocket. The 'HIGH' region motif lies at 38–47; that stretch reads PTADSLHLGN. 2 residues coordinate L-tyrosine: Tyr-160 and Gln-164. The 'KMSKS' region motif lies at 222–226; that stretch reads KFGKS. Lys-225 contacts ATP. The S4 RNA-binding domain occupies 346 to 410; sequence VNLVNFLVEN…GKKKILICKV (65 aa).

The protein belongs to the class-I aminoacyl-tRNA synthetase family. TyrS type 1 subfamily. In terms of assembly, homodimer.

It localises to the cytoplasm. The enzyme catalyses tRNA(Tyr) + L-tyrosine + ATP = L-tyrosyl-tRNA(Tyr) + AMP + diphosphate + H(+). Functionally, catalyzes the attachment of tyrosine to tRNA(Tyr) in a two-step reaction: tyrosine is first activated by ATP to form Tyr-AMP and then transferred to the acceptor end of tRNA(Tyr). This chain is Tyrosine--tRNA ligase, found in Mycoplasmopsis synoviae (strain 53) (Mycoplasma synoviae).